The chain runs to 191 residues: Large ribosomal subunit protein bL9 (191 aa).

The tract at residues 150 to 191 (EAERQAKGESLTSADAIYGVDEDALRPEDFFDPDADRDGDDE) is disordered. Residues 179-191 (FFDPDADRDGDDE) are compositionally biased toward acidic residues.

The protein belongs to the bacterial ribosomal protein bL9 family.

Its function is as follows. Binds to the 23S rRNA. The chain is Large ribosomal subunit protein bL9 from Allorhizobium ampelinum (strain ATCC BAA-846 / DSM 112012 / S4) (Agrobacterium vitis (strain S4)).